The primary structure comprises 332 residues: Holliday junction branch migration complex subunit RuvB (332 aa).

The interval 1 to 181 (MARILDNDVM…FGITGHMEYY (181 aa)) is large ATPase domain (RuvB-L). ATP is bound by residues Leu-20, Arg-21, Gly-62, Lys-65, Thr-66, Thr-67, 128 to 130 (EDF), Arg-171, Tyr-181, and Arg-218. A Mg(2+)-binding site is contributed by Thr-66. The small ATPAse domain (RuvB-S) stretch occupies residues 182–252 (QEKDLTEIVE…ITDRALTMLD (71 aa)). The head domain (RuvB-H) stretch occupies residues 255 to 332 (REGLDYIDQK…RHLGYPYQNT (78 aa)). Residues Arg-291, Arg-310, Arg-312, and Arg-315 each coordinate DNA.

It belongs to the RuvB family. In terms of assembly, homohexamer. Forms an RuvA(8)-RuvB(12)-Holliday junction (HJ) complex. HJ DNA is sandwiched between 2 RuvA tetramers; dsDNA enters through RuvA and exits via RuvB. An RuvB hexamer assembles on each DNA strand where it exits the tetramer. Each RuvB hexamer is contacted by two RuvA subunits (via domain III) on 2 adjacent RuvB subunits; this complex drives branch migration. In the full resolvosome a probable DNA-RuvA(4)-RuvB(12)-RuvC(2) complex forms which resolves the HJ.

It is found in the cytoplasm. It carries out the reaction ATP + H2O = ADP + phosphate + H(+). In terms of biological role, the RuvA-RuvB-RuvC complex processes Holliday junction (HJ) DNA during genetic recombination and DNA repair, while the RuvA-RuvB complex plays an important role in the rescue of blocked DNA replication forks via replication fork reversal (RFR). RuvA specifically binds to HJ cruciform DNA, conferring on it an open structure. The RuvB hexamer acts as an ATP-dependent pump, pulling dsDNA into and through the RuvAB complex. RuvB forms 2 homohexamers on either side of HJ DNA bound by 1 or 2 RuvA tetramers; 4 subunits per hexamer contact DNA at a time. Coordinated motions by a converter formed by DNA-disengaged RuvB subunits stimulates ATP hydrolysis and nucleotide exchange. Immobilization of the converter enables RuvB to convert the ATP-contained energy into a lever motion, pulling 2 nucleotides of DNA out of the RuvA tetramer per ATP hydrolyzed, thus driving DNA branch migration. The RuvB motors rotate together with the DNA substrate, which together with the progressing nucleotide cycle form the mechanistic basis for DNA recombination by continuous HJ branch migration. Branch migration allows RuvC to scan DNA until it finds its consensus sequence, where it cleaves and resolves cruciform DNA. This Streptococcus pyogenes serotype M12 (strain MGAS9429) protein is Holliday junction branch migration complex subunit RuvB.